Reading from the N-terminus, the 30-residue chain is Rothein 3.4 (30 aa).

A Leucine amide modification is found at Leu30.

The protein belongs to the frog skin active peptide (FSAP) family. Rothein subfamily. As to expression, expressed by the skin dorsal glands.

The protein resides in the secreted. In terms of biological role, lacks antimicrobial activity. Does not inhibit the formation of NO by neuronal nitric oxide. This Litoria rothii (Roth's tree frog) protein is Rothein 3.4.